The following is a 778-amino-acid chain: Protein SPT2 homolog (778 aa).

Disordered regions lie at residues 1 to 21 (MDFH…GIAK), 50 to 625 (KKDE…AKPK), and 639 to 685 (VPKS…DDDD). The tract at residues 1 to 665 (MDFHSVLKMA…PGHRPAMRPP (665 aa)) is important for interaction with DNA. Residues 44-83 (VQAFLRKKDEESRRKETVEKRKKEDLLAKRKELKHDRKAR) adopt a coiled-coil conformation. Over residues 50–78 (KKDEESRRKETVEKRKKEDLLAKRKELKH) the composition is skewed to basic and acidic residues. Residues 114-135 (EEDQNDNMAAEGEEYMTEEELY) show a composition bias toward acidic residues. Positions 153 to 167 (QKVPKPAPGKKPPTP) are enriched in pro residues. The span at 190–227 (RPVKKEERLRTAEELKELEFLERKAQKADRKDPKRNEQ) shows a compositional bias: basic and acidic residues. A coiled-coil region spans residues 193-221 (KKEERLRTAEELKELEFLERKAQKADRKD). A compositionally biased stretch (polar residues) spans 242-269 (LKGTHSGNSKSSSTEQNGTIRKSSSDTG). The span at 270–286 (SRTEKSGSVFHTKESKK) shows a compositional bias: basic and acidic residues. Positions 312-335 (SSQPSAASNSAFGRPSGSARPSGS) are enriched in low complexity. 2 stretches are compositionally biased toward gly residues: residues 336–357 (SGPG…GGSA) and 365–384 (GGSG…GKPI). A compositionally biased stretch (low complexity) spans 385–394 (GGLHSSHGSG). Residues 395–417 (KPTGGTGSGSGKPTGASGSGSGK) show a composition bias toward gly residues. 2 stretches are compositionally biased toward low complexity: residues 418–493 (PTGS…SGSA) and 506–559 (GSGS…PSSS). Residues 588-604 (VRPNSTSVPGSARSSLG) are compositionally biased toward polar residues. Pro residues predominate over residues 662-671 (MRPPGPPLPP). The interval 666 to 778 (GPPLPPITSS…QLKAAKKMSR (113 aa)) is important for interaction with histones. The stretch at 735 to 778 (REQQKEEARSLRLGIQEDLEELQREEEELKRKAKQLKAAKKMSR) forms a coiled coil.

The protein belongs to the SPT2 family. In terms of assembly, interacts with histones. Interacts with a heterotetrameric complex formed by histone H3 and H4, especially when the histone tetramer is not bound to DNA.

Its subcellular location is the nucleus. It localises to the nucleolus. In terms of biological role, histone chaperone that stabilizes pre-existing histone tetramers and regulates replication-independent histone exchange on chromatin. Required for normal chromatin refolding in the coding region of transcribed genes, and for the suppression of spurious transcription. Binds DNA and histones and promotes nucleosome assembly (in vitro). Facilitates formation of tetrameric histone complexes containing histone H3 and H4. Modulates RNA polymerase 1-mediated transcription. Binds DNA, with a preference for branched DNA species, such as Y-form DNA and Holliday junction DNA. This Xenopus tropicalis (Western clawed frog) protein is Protein SPT2 homolog (spty2d1).